Here is a 397-residue protein sequence, read N- to C-terminus: Phosphoglycerate kinase (397 aa).

Substrate contacts are provided by residues 23 to 25 (DFN), R38, 61 to 64 (HMGK), R122, and R155. Residues K206, G296, E327, and 353–356 (GGDS) contribute to the ATP site.

This sequence belongs to the phosphoglycerate kinase family. As to quaternary structure, monomer.

It localises to the cytoplasm. It catalyses the reaction (2R)-3-phosphoglycerate + ATP = (2R)-3-phospho-glyceroyl phosphate + ADP. It participates in carbohydrate degradation; glycolysis; pyruvate from D-glyceraldehyde 3-phosphate: step 2/5. The sequence is that of Phosphoglycerate kinase from Clostridium perfringens (strain ATCC 13124 / DSM 756 / JCM 1290 / NCIMB 6125 / NCTC 8237 / Type A).